The chain runs to 167 residues: Transcriptional regulator MraZ (167 aa).

2 SpoVT-AbrB domains span residues 8–51 (ESHH…YGDH) and 92–135 (SLPT…KPET).

The protein belongs to the MraZ family. In terms of assembly, forms oligomers.

Its subcellular location is the cytoplasm. It is found in the nucleoid. This Ruegeria sp. (strain TM1040) (Silicibacter sp.) protein is Transcriptional regulator MraZ.